Reading from the N-terminus, the 1128-residue chain is Nck-associated protein 1 (1128 aa).

N-acetylserine is present on serine 2. Positions 640 to 665 (AVNKKSKKQTGKKGEPEREKPGVESM) are disordered. Over residues 651 to 665 (KKGEPEREKPGVESM) the composition is skewed to basic and acidic residues. Residues 995–1015 (IACLLMVFVAVSLPTLASNVM) traverse the membrane as a helical segment.

The protein belongs to the HEM-1/HEM-2 family. Component of the WAVE1 complex composed of ABI2, CYFIP1 or CYFIP2, BRK1, NCKAP1 and WASF1/WAVE1. Within the complex, a heterodimer containing NCKAP1 and CYFIP1 interacts with a heterotrimer formed by WAVE1, ABI2 and BRK1. Component of the WAVE2 complex composed of ABI1, CYFIP1/SRA1, NCKAP1/NAP1 and WASF2/WAVE2. CYFIP2 binds to activated RAC1 which causes the complex to dissociate, releasing activated WASF1. The complex can also be activated by NCK1. Associates preferentially with the first SH3 domain of NCK. Interacts with NYAP1, NYAP2 and MYO16. Interacts with TMEM132D. As to quaternary structure, (Microbial infection) Interacts with human cytomegalovirus protein UL135. As to expression, expressed in all tissues examined except peripheral blood leukocytes, with highest expression in brain, heart, and skeletal muscle. Expressed in cells of various brain regions including Purkinje cells and dentate nucleus of the cerebellum, CA4 region and dentate gyrus of the hippocampus, and in frontal gray and white matter.

The protein localises to the cell membrane. Its subcellular location is the cell projection. It localises to the lamellipodium membrane. Its function is as follows. Part of the WAVE complex that regulates lamellipodia formation. The WAVE complex regulates actin filament reorganization via its interaction with the Arp2/3 complex. Actin remodeling activity is regulated by RAC1. As component of the WAVE1 complex, required for BDNF-NTRK2 endocytic trafficking and signaling from early endosomes. This chain is Nck-associated protein 1 (NCKAP1), found in Homo sapiens (Human).